The chain runs to 349 residues: Phenylalanine--tRNA ligase alpha subunit (349 aa).

Residue glutamate 264 coordinates Mg(2+).

Belongs to the class-II aminoacyl-tRNA synthetase family. Phe-tRNA synthetase alpha subunit type 1 subfamily. As to quaternary structure, tetramer of two alpha and two beta subunits. It depends on Mg(2+) as a cofactor.

It localises to the cytoplasm. The catalysed reaction is tRNA(Phe) + L-phenylalanine + ATP = L-phenylalanyl-tRNA(Phe) + AMP + diphosphate + H(+). The chain is Phenylalanine--tRNA ligase alpha subunit from Myxococcus xanthus (strain DK1622).